The sequence spans 361 residues: Hydroxymethylglutaryl-CoA synthase (361 aa).

The active-site Proton donor/acceptor is the Glu92. The Acyl-thioester intermediate role is filled by Cys124. Positions 124, 165, 214, and 247 each coordinate (3S)-3-hydroxy-3-methylglutaryl-CoA. Residue His247 is the Proton donor/acceptor of the active site. Lys252 contacts CoA. 3 residues coordinate (3S)-3-hydroxy-3-methylglutaryl-CoA: Lys256, Asn279, and Ser309.

It belongs to the thiolase-like superfamily. Archaeal HMG-CoA synthase family. Interacts with acetoacetyl-CoA thiolase that catalyzes the precedent step in the pathway and with a DUF35 protein. The acetoacetyl-CoA thiolase/HMG-CoA synthase complex channels the intermediate via a fused CoA-binding site, which allows for efficient coupling of the endergonic thiolase reaction with the exergonic HMGCS reaction.

It carries out the reaction acetoacetyl-CoA + acetyl-CoA + H2O = (3S)-3-hydroxy-3-methylglutaryl-CoA + CoA + H(+). Its pathway is metabolic intermediate biosynthesis; (R)-mevalonate biosynthesis; (R)-mevalonate from acetyl-CoA: step 2/3. Catalyzes the condensation of acetyl-CoA with acetoacetyl-CoA to form 3-hydroxy-3-methylglutaryl-CoA (HMG-CoA). Functions in the mevalonate (MVA) pathway leading to isopentenyl diphosphate (IPP), a key precursor for the biosynthesis of isoprenoid compounds that are building blocks of archaeal membrane lipids. This is Hydroxymethylglutaryl-CoA synthase from Aeropyrum pernix (strain ATCC 700893 / DSM 11879 / JCM 9820 / NBRC 100138 / K1).